The primary structure comprises 155 residues: Ribosomal RNA large subunit methyltransferase H (155 aa).

Residues G104 and 123-128 each bind S-adenosyl-L-methionine; that span reads LSRLTL.

Belongs to the RNA methyltransferase RlmH family. Homodimer.

It localises to the cytoplasm. The catalysed reaction is pseudouridine(1915) in 23S rRNA + S-adenosyl-L-methionine = N(3)-methylpseudouridine(1915) in 23S rRNA + S-adenosyl-L-homocysteine + H(+). Specifically methylates the pseudouridine at position 1915 (m3Psi1915) in 23S rRNA. In Marinomonas sp. (strain MWYL1), this protein is Ribosomal RNA large subunit methyltransferase H.